A 192-amino-acid polypeptide reads, in one-letter code: Thiol-disulfide oxidoreductase ResA (192 aa).

A helical; Signal-anchor for type II membrane protein transmembrane segment spans residues 22-41; it reads SSILLILVAAVVFAIVSNMK. The region spanning 47-189 is the Thioredoxin domain; it reads YRVGDAAPDF…LEGYLNDIAP (143 aa). A disulfide bridge links Cys89 with Cys92.

The protein belongs to the thioredoxin family. ResA subfamily.

The protein resides in the cell membrane. Its pathway is protein modification; cytochrome c assembly. Its function is as follows. Thiol-disulfide oxidoreductase which is required in disulfide reduction during c-type cytochrome synthesis. May accept reducing equivalents from CcdA, leading to breakage of disulfide bonds in apocytochrome c; following this reduction heme can be covalently attached. This is Thiol-disulfide oxidoreductase ResA from Oceanobacillus iheyensis (strain DSM 14371 / CIP 107618 / JCM 11309 / KCTC 3954 / HTE831).